Reading from the N-terminus, the 514-residue chain is Transcription termination factor Rho (514 aa).

Residues 25-52 (EPSSTPGPARNARRSNRRMRHPDKDVDK) form a disordered region. Residues 35 to 45 (NARRSNRRMRH) show a composition bias toward basic residues. In terms of domain architecture, Rho RNA-BD spans 141-216 (LMYGEGTLEI…LRIEAINHAD (76 aa)). ATP contacts are provided by residues 259 to 264 (GFGQRG), 271 to 276 (RAGKTM), and R302.

Belongs to the Rho family. In terms of assembly, homohexamer. The homohexamer assembles into an open ring structure.

Functionally, facilitates transcription termination by a mechanism that involves Rho binding to the nascent RNA, activation of Rho's RNA-dependent ATPase activity, and release of the mRNA from the DNA template. This chain is Transcription termination factor Rho, found in Rhodopirellula baltica (strain DSM 10527 / NCIMB 13988 / SH1).